Here is a 132-residue protein sequence, read N- to C-terminus: Small ribosomal subunit protein uS8 (132 aa).

Belongs to the universal ribosomal protein uS8 family. In terms of assembly, part of the 30S ribosomal subunit. Contacts proteins S5 and S12.

In terms of biological role, one of the primary rRNA binding proteins, it binds directly to 16S rRNA central domain where it helps coordinate assembly of the platform of the 30S subunit. The protein is Small ribosomal subunit protein uS8 of Caulobacter vibrioides (strain ATCC 19089 / CIP 103742 / CB 15) (Caulobacter crescentus).